A 1454-amino-acid chain; its full sequence is Alpha-2-macroglobulin-like protein 1 (1454 aa).

A signal peptide spans 1–17 (MWAQLLLGMLALSPAIA). Cys-40 and Cys-78 are disulfide-bonded. Asn-120 carries N-linked (GlcNAc...) asparagine glycosylation. 2 disulfide bridges follow: Cys-241-Cys-291 and Cys-259-Cys-279. 2 N-linked (GlcNAc...) asparagine glycosylation sites follow: Asn-281 and Asn-409. 7 disulfides stabilise this stretch: Cys-464/Cys-557, Cys-589/Cys-769, Cys-819/Cys-847, Cys-845/Cys-881, Cys-919/Cys-1307, Cys-1075/Cys-1123, and Cys-1338/Cys-1453. The bait region stretch occupies residues 695–726 (SHRSPEYSTAMGAGGGHPEAFESSTPLHQAED). The N-linked (GlcNAc...) asparagine glycan is linked to Asn-857. Positions 970–973 (CGEQ) form a cross-link, isoglutamyl cysteine thioester (Cys-Gln). Asn-1020 carries an N-linked (GlcNAc...) asparagine glycan.

It belongs to the protease inhibitor I39 (alpha-2-macroglobulin) family. As to quaternary structure, monomer. In the epidermis, expressed predominantly in the granular layer at the apical edge of keratinocytes (at protein level). Also detected in placenta, testis and thymus but not in epithelia of kidney, lung, small intestine or colon.

The protein localises to the secreted. Is able to inhibit all four classes of proteinases by a unique 'trapping' mechanism. This protein has a peptide stretch, called the 'bait region' which contains specific cleavage sites for different proteinases. When a proteinase cleaves the bait region, a conformational change is induced in the protein which traps the proteinase. The entrapped enzyme remains active against low molecular weight substrates (activity against high molecular weight substrates is greatly reduced). Following cleavage in the bait region a thioester bond is hydrolyzed and mediates the covalent binding of the protein to the proteinase. Displays inhibitory activity against chymotrypsin, papain, thermolysin, subtilisin A and, to a lesser extent, elastase but not trypsin. May play an important role during desquamation by inhibiting extracellular proteases. This Homo sapiens (Human) protein is Alpha-2-macroglobulin-like protein 1.